The sequence spans 123 residues: Small ribosomal subunit protein uS12c (123 aa).

Belongs to the universal ribosomal protein uS12 family. As to quaternary structure, part of the 30S ribosomal subunit.

The protein resides in the plastid. It is found in the chloroplast. In terms of biological role, with S4 and S5 plays an important role in translational accuracy. Located at the interface of the 30S and 50S subunits. This chain is Small ribosomal subunit protein uS12c (rps12), found in Chara vulgaris (Common stonewort).